Consider the following 576-residue polypeptide: Potassium-transporting ATPase potassium-binding subunit (576 aa).

12 consecutive transmembrane segments (helical) span residues 3-23 (IFLDIFSFILFFGILTIISPI), 68-88 (LYALLSFNFLGFLVLFLTLLF), 137-157 (GLALQNFLSAASGIVVALVLI), 179-199 (ILYVLLPVAFFSALFLVSQGV), 267-287 (FEAFLIILIPASLVFTFGYMI), 294-314 (WFLYSVMLFVLMLFMGIQYYF), 339-359 (FGIGGTVLFSSITTATSCGAV), 369-389 (LGGLVPMSLISLGEIIFGGVG), 391-411 (GLYGMIAMVIIAVFVAGLMIG), 430-450 (VVITLVSGITALLLTTLALYT), 495-515 (ITTGLAMLIGRFIPIIAVFYM), and 537-557 (LVFGVWLVFIIIVVGALTFLP).

The protein belongs to the KdpA family. The system is composed of three essential subunits: KdpA, KdpB and KdpC.

Its subcellular location is the cell inner membrane. Functionally, part of the high-affinity ATP-driven potassium transport (or Kdp) system, which catalyzes the hydrolysis of ATP coupled with the electrogenic transport of potassium into the cytoplasm. This subunit binds the periplasmic potassium ions and delivers the ions to the membrane domain of KdpB through an intramembrane tunnel. This Hydrogenobaculum sp. (strain Y04AAS1) protein is Potassium-transporting ATPase potassium-binding subunit.